We begin with the raw amino-acid sequence, 330 residues long: MAQLMIDIAGTELTAEDKKLLAAPAVNGLILFTRNFASLEQLQELIREARAAAAKPLLIAVDHEGGRVQRFREGFSAIPSMGSLQKIENEDERQRAARDLGWLMAAEVQAVGIDISFAPVLDVDDCSDVIGDRAFSAVPSEISKLASSFIEGMHEAGMACTGKHFPGHGSVQADSHIAIPEDDRTLEQIRAHDLKPFLSLIQKLDGIMPAHVIYPQIDPQPAGFSEFWLQQILRSELQFNGTIFSDDLSMQGATVAGDMEQRAVAALKAGCDMILVCNDRAGAVQVLDADLPATEPESAQRVNRMLMSSNAVSLEELKRTQRWEQAQRWL.

Residues D62, R70, R133, and 163-164 each bind substrate; that span reads KH. H176 serves as the catalytic Proton donor/acceptor. D246 (nucleophile) is an active-site residue.

Belongs to the glycosyl hydrolase 3 family. NagZ subfamily.

Its subcellular location is the cytoplasm. The enzyme catalyses Hydrolysis of terminal non-reducing N-acetyl-D-hexosamine residues in N-acetyl-beta-D-hexosaminides.. It functions in the pathway cell wall biogenesis; peptidoglycan recycling. In terms of biological role, plays a role in peptidoglycan recycling by cleaving the terminal beta-1,4-linked N-acetylglucosamine (GlcNAc) from peptide-linked peptidoglycan fragments, giving rise to free GlcNAc, anhydro-N-acetylmuramic acid and anhydro-N-acetylmuramic acid-linked peptides. The protein is Beta-hexosaminidase of Idiomarina loihiensis (strain ATCC BAA-735 / DSM 15497 / L2-TR).